The chain runs to 174 residues: Ubiquinone biosynthesis accessory factor UbiT (174 aa).

In terms of domain architecture, SCP2 spans 45–133 (LDDGELEFLE…LGLYVKNLMD (89 aa)).

The protein belongs to the UbiT family.

It participates in cofactor biosynthesis; ubiquinone biosynthesis. Functionally, required for O(2)-independent ubiquinone (coenzyme Q) biosynthesis. Likely functions as an accessory factor. This Escherichia coli O157:H7 protein is Ubiquinone biosynthesis accessory factor UbiT.